The following is a 463-amino-acid chain: Glutamate--tRNA ligase 2 (463 aa).

The short motif at 10–20 is the 'HIGH' region element; that stretch reads PSPTGFLHIGS. The short motif at 239–243 is the 'KMSKS' region element; it reads KLSKR. Position 242 (Lys242) interacts with ATP.

It belongs to the class-I aminoacyl-tRNA synthetase family. Glutamate--tRNA ligase type 1 subfamily. Monomer.

The protein resides in the cytoplasm. It catalyses the reaction tRNA(Glu) + L-glutamate + ATP = L-glutamyl-tRNA(Glu) + AMP + diphosphate. Its function is as follows. Catalyzes the attachment of glutamate to tRNA(Glu) in a two-step reaction: glutamate is first activated by ATP to form Glu-AMP and then transferred to the acceptor end of tRNA(Glu). This chain is Glutamate--tRNA ligase 2, found in Rickettsia akari (strain Hartford).